A 211-amino-acid chain; its full sequence is Pyridoxine/pyridoxamine 5'-phosphate oxidase (211 aa).

Substrate-binding positions include 7–10 (RTDY) and Lys65. FMN-binding positions include 60 to 65 (RILLIK), 75 to 76 (FT), Arg81, and Lys82. Tyr122, Arg126, and Ser130 together coordinate substrate. FMN contacts are provided by residues 139–140 (QS) and Trp183. 189–191 (RLH) contacts substrate. Residue Arg193 coordinates FMN.

Belongs to the pyridoxamine 5'-phosphate oxidase family. In terms of assembly, homodimer. Requires FMN as cofactor.

It catalyses the reaction pyridoxamine 5'-phosphate + O2 + H2O = pyridoxal 5'-phosphate + H2O2 + NH4(+). The catalysed reaction is pyridoxine 5'-phosphate + O2 = pyridoxal 5'-phosphate + H2O2. Its pathway is cofactor metabolism; pyridoxal 5'-phosphate salvage; pyridoxal 5'-phosphate from pyridoxamine 5'-phosphate: step 1/1. It participates in cofactor metabolism; pyridoxal 5'-phosphate salvage; pyridoxal 5'-phosphate from pyridoxine 5'-phosphate: step 1/1. In terms of biological role, catalyzes the oxidation of either pyridoxine 5'-phosphate (PNP) or pyridoxamine 5'-phosphate (PMP) into pyridoxal 5'-phosphate (PLP). The protein is Pyridoxine/pyridoxamine 5'-phosphate oxidase of Janthinobacterium sp. (strain Marseille) (Minibacterium massiliensis).